Here is a 96-residue protein sequence, read N- to C-terminus: UPF0213 protein BCE33L0031 (96 aa).

The GIY-YIG domain maps to 4-79; the sequence is NKHCFYVVEC…KQLNRKQKEE (76 aa).

This sequence belongs to the UPF0213 family.

The protein is UPF0213 protein BCE33L0031 of Bacillus cereus (strain ZK / E33L).